Here is a 120-residue protein sequence, read N- to C-terminus: Small ribosomal subunit protein bS6 (120 aa).

The disordered stretch occupies residues 93 to 120 (KKADTAPSSMMKTVEREEARKASQTEQA). Residues 105–120 (TVEREEARKASQTEQA) are compositionally biased toward basic and acidic residues.

Belongs to the bacterial ribosomal protein bS6 family.

In terms of biological role, binds together with bS18 to 16S ribosomal RNA. The chain is Small ribosomal subunit protein bS6 from Delftia acidovorans (strain DSM 14801 / SPH-1).